A 282-amino-acid polypeptide reads, in one-letter code: Cholesterol 25-hydroxylase-like protein 1, member 1 (282 aa).

An N-linked (GlcNAc...) asparagine glycan is attached at Asn3. The next 3 helical transmembrane spans lie at 40 to 60 (FFPV…FAVL), 85 to 107 (MLRT…VLIT), and 127 to 147 (FSGG…WHMV). Residues 133–265 (ALLVFDTQYF…FSHWDKIFGT (133 aa)) form the Fatty acid hydroxylase domain. The short motif at 144-148 (WHMVH) is the Histidine box-1 element. A Histidine box-2 motif is present at residues 159-163 (HAIHH). The Histidine box-3 motif lies at 240–246 (AHDMHHQ).

It belongs to the sterol desaturase family. Fe cation serves as cofactor.

Its subcellular location is the endoplasmic reticulum membrane. In terms of biological role, may catalyze the formation of 25-hydroxycholesterol from cholesterol. The polypeptide is Cholesterol 25-hydroxylase-like protein 1, member 1 (ch25hl1.1) (Danio rerio (Zebrafish)).